Here is a 631-residue protein sequence, read N- to C-terminus: Shootin-1 (631 aa).

Position 1 is an N-acetylmethionine (methionine 1). Phosphoserine occurs at positions 3 and 4. Positions 7 to 353 (EKQLQLITSL…RVNQSENSVP (347 aa)) form a coiled coil. At serine 101 the chain carries Phosphoserine; by PAK1. At serine 249 the chain carries Phosphoserine. The tract at residues 343–511 (KRVNQSENSV…SESKSMPVLG (169 aa)) is disordered. Over residues 352 to 369 (VPPPPPPPPPLPPPPPNP) the composition is skewed to pro residues. Serine 375 carries the post-translational modification Phosphoserine. Positions 403 to 418 (TDLKRQAVEEMMDRIK) are enriched in basic and acidic residues. Over residues 456–465 (LNKSTSSRSL) the composition is skewed to polar residues. A Phosphoserine modification is found at serine 473. Position 487 is a phosphothreonine (threonine 487). The segment covering 490 to 505 (ADSSSPTGILATSESK) has biased composition (polar residues). A Phosphoserine modification is found at serine 494. Threonine 496 is modified (phosphothreonine). A phosphoserine mark is found at serine 506, serine 515, serine 532, and serine 534. Disordered stretches follow at residues 524–566 (KTLE…IGCR) and 579–631 (VVVL…SSNC). Phosphothreonine is present on threonine 537. Residues 550-561 (CTSSKVTFQPPS) are compositionally biased toward polar residues. Over residues 590-631 (PQTKDQVAEKDPTQHKEDEGEIQPENKEDSIENVRETDSSNC) the composition is skewed to basic and acidic residues.

This sequence belongs to the shootin family. Interacts with L1CAM; this interaction occurs in axonal growth cones. Interacts with actin filament retrograde flow; this interaction is enhanced in a netrin-1- and PAK1-dependent manner and promotes F-actin-substrate coupling and concomitant formation of traction forces at axonal growth cones. Interacts with RUFY3. Interacts with PFN2. Interacts (via N-terminus) with KIF20B; this interaction is direct and promotes the association of SHTN1 to microtubules in primary neurons. Associates with microtubule. Phosphorylated on Ser-101 and Ser-249 by PAK1 through a CDC42- and RAC1-dependent signaling pathway, which enhances its association with F-actin retrograde flow in filopodia and lamellipodia of axonal growth cones. Phosphorylation on Ser-101 and Ser-249 is increased by netrin-1.

The protein resides in the perikaryon. The protein localises to the cell projection. It is found in the axon. It localises to the growth cone. Its subcellular location is the cytoplasm. The protein resides in the cytoskeleton. The protein localises to the filopodium. It is found in the lamellipodium. Involved in the generation of internal asymmetric signals required for neuronal polarization and neurite outgrowth. Mediates netrin-1-induced F-actin-substrate coupling or 'clutch engagement' within the axon growth cone through activation of CDC42, RAC1 and PAK1-dependent signaling pathway, thereby converting the F-actin retrograde flow into traction forces, concomitantly with filopodium extension and axon outgrowth. Plays a role in cytoskeletal organization by regulating the subcellular localization of phosphoinositide 3-kinase (PI3K) activity at the axonal growth cone. Also plays a role in regenerative neurite outgrowth. In the developing cortex, cooperates with KIF20B to promote both the transition from the multipolar to the bipolar stage and the radial migration of cortical neurons from the ventricular zone toward the superficial layer of the neocortex. Involved in the accumulation of phosphatidylinositol 3,4,5-trisphosphate (PIP3) in the growth cone of primary hippocampal neurons. The polypeptide is Shootin-1 (Homo sapiens (Human)).